Here is a 204-residue protein sequence, read N- to C-terminus: Ciliary microtubule inner protein 7 (204 aa).

It localises to the cell projection. The protein resides in the cilium. The chain is Ciliary microtubule inner protein 7 from Homo sapiens (Human).